The chain runs to 372 residues: Aminomethyltransferase (372 aa).

The protein belongs to the GcvT family. In terms of assembly, the glycine cleavage system is composed of four proteins: P, T, L and H.

The enzyme catalyses N(6)-[(R)-S(8)-aminomethyldihydrolipoyl]-L-lysyl-[protein] + (6S)-5,6,7,8-tetrahydrofolate = N(6)-[(R)-dihydrolipoyl]-L-lysyl-[protein] + (6R)-5,10-methylene-5,6,7,8-tetrahydrofolate + NH4(+). Its function is as follows. The glycine cleavage system catalyzes the degradation of glycine. The protein is Aminomethyltransferase of Burkholderia ambifaria (strain MC40-6).